The following is a 100-amino-acid chain: Small ribosomal subunit protein uS14 (100 aa).

Belongs to the universal ribosomal protein uS14 family. Part of the 30S ribosomal subunit. Contacts proteins S3 and S10.

Functionally, binds 16S rRNA, required for the assembly of 30S particles and may also be responsible for determining the conformation of the 16S rRNA at the A site. The chain is Small ribosomal subunit protein uS14 from Prochlorococcus marinus (strain MIT 9301).